Here is a 200-residue protein sequence, read N- to C-terminus: A-type ATP synthase subunit E (200 aa).

This sequence belongs to the V-ATPase E subunit family. Has multiple subunits with at least A(3), B(3), C, D, E, F, H, I and proteolipid K(x).

Its subcellular location is the cell membrane. Functionally, component of the A-type ATP synthase that produces ATP from ADP in the presence of a proton gradient across the membrane. In Methanopyrus kandleri (strain AV19 / DSM 6324 / JCM 9639 / NBRC 100938), this protein is A-type ATP synthase subunit E.